A 398-amino-acid chain; its full sequence is Succinate--CoA ligase [ADP-forming] subunit beta (398 aa).

The region spanning 9-254 (KRLLHEYGAP…TSEEDPKEIE (246 aa)) is the ATP-grasp domain. ATP-binding positions include K46, 53–55 (GRG), E109, A112, and E117. Mg(2+) contacts are provided by N209 and D223. Residues N274 and 331–333 (GIM) each bind substrate.

Belongs to the succinate/malate CoA ligase beta subunit family. In terms of assembly, heterotetramer of two alpha and two beta subunits. Mg(2+) is required as a cofactor.

It carries out the reaction succinate + ATP + CoA = succinyl-CoA + ADP + phosphate. It catalyses the reaction GTP + succinate + CoA = succinyl-CoA + GDP + phosphate. Its pathway is carbohydrate metabolism; tricarboxylic acid cycle; succinate from succinyl-CoA (ligase route): step 1/1. In terms of biological role, succinyl-CoA synthetase functions in the citric acid cycle (TCA), coupling the hydrolysis of succinyl-CoA to the synthesis of either ATP or GTP and thus represents the only step of substrate-level phosphorylation in the TCA. The beta subunit provides nucleotide specificity of the enzyme and binds the substrate succinate, while the binding sites for coenzyme A and phosphate are found in the alpha subunit. This chain is Succinate--CoA ligase [ADP-forming] subunit beta, found in Bartonella henselae (strain ATCC 49882 / DSM 28221 / CCUG 30454 / Houston 1) (Rochalimaea henselae).